The primary structure comprises 174 residues: V-type proton ATPase catalytic subunit A (174 aa).

The protein belongs to the ATPase alpha/beta chains family. In terms of assembly, V-ATPase is a heteromultimeric enzyme made up of two complexes: the ATP-hydrolytic V1 complex and the proton translocation V0 complex. The V1 complex consists of three catalytic AB heterodimers that form a heterohexamer, three peripheral stalks each consisting of EG heterodimers, one central rotor including subunits D and F, and the regulatory subunits C and H. The proton translocation complex V0 consists of the proton transport subunit a, a ring of proteolipid subunits c9c'', rotary subunit d, subunits e and f, and the accessory subunits ATP6AP1/Ac45 and ATP6AP2/PRR. Interacts with the V0 complex V-ATPase subunit a4 ATP6V0A4. Interacts with WFS1. Interacts with alpha-crystallin B chain/CRYAB and with MTOR, forming a ternary complex.

The protein resides in the cytoplasm. The protein localises to the cytosol. It localises to the cytoplasmic vesicle. It is found in the secretory vesicle. Its subcellular location is the clathrin-coated vesicle membrane. The protein resides in the lysosome. The catalysed reaction is ATP + H2O + 4 H(+)(in) = ADP + phosphate + 5 H(+)(out). ATP hydrolysis occurs at the interface between the nucleotide-binding domains of subunits A and B. ATP hydrolysis triggers a conformational change in the subunits D and F, which induces a shift of subunit d. The c-ring is subsequently rotated and results in a continuous proton translocation across the membrane. In terms of biological role, catalytic subunit of the V1 complex of vacuolar(H+)-ATPase (V-ATPase), a multisubunit enzyme composed of a peripheral complex (V1) that hydrolyzes ATP and a membrane integral complex (V0) that translocates protons. V-ATPase is responsible for acidifying and maintaining the pH of intracellular compartments and in some cell types, is targeted to the plasma membrane, where it is responsible for acidifying the extracellular environment. In aerobic conditions, involved in intracellular iron homeostasis, thus triggering the activity of Fe(2+) prolyl hydroxylase (PHD) enzymes, and leading to HIF1A hydroxylation and subsequent proteasomal degradation. May play a role in neurite development and synaptic connectivity. In Mesocricetus auratus (Golden hamster), this protein is V-type proton ATPase catalytic subunit A.